The primary structure comprises 408 residues: NADH-quinone oxidoreductase subunit D (408 aa).

The protein belongs to the complex I 49 kDa subunit family. In terms of assembly, NDH-1 is composed of 14 different subunits. Subunits NuoB, C, D, E, F, and G constitute the peripheral sector of the complex.

The protein localises to the cell inner membrane. The enzyme catalyses a quinone + NADH + 5 H(+)(in) = a quinol + NAD(+) + 4 H(+)(out). In terms of biological role, NDH-1 shuttles electrons from NADH, via FMN and iron-sulfur (Fe-S) centers, to quinones in the respiratory chain. The immediate electron acceptor for the enzyme in this species is believed to be ubiquinone. Couples the redox reaction to proton translocation (for every two electrons transferred, four hydrogen ions are translocated across the cytoplasmic membrane), and thus conserves the redox energy in a proton gradient. The protein is NADH-quinone oxidoreductase subunit D of Campylobacter hominis (strain ATCC BAA-381 / DSM 21671 / CCUG 45161 / LMG 19568 / NCTC 13146 / CH001A).